The sequence spans 341 residues: 4-hydroxy-2-oxovalerate aldolase (341 aa).

Residues 9–259 (VRITEVCLRD…KLDIDLYKMM (251 aa)) form the Pyruvate carboxyltransferase domain. 17-18 (RD) serves as a coordination point for substrate. Mn(2+) is bound at residue D18. Catalysis depends on H21, which acts as the Proton acceptor. Substrate-binding residues include S171 and H198. Mn(2+)-binding residues include H198 and H200. Y289 is a substrate binding site.

Belongs to the 4-hydroxy-2-oxovalerate aldolase family.

The enzyme catalyses (S)-4-hydroxy-2-oxopentanoate = acetaldehyde + pyruvate. In Bacillus thuringiensis (strain Al Hakam), this protein is 4-hydroxy-2-oxovalerate aldolase.